A 788-amino-acid polypeptide reads, in one-letter code: Protein translocase subunit SecA 2 (788 aa).

ATP is bound by residues Q86, 104 to 108 (GEGKT), and D493.

This sequence belongs to the SecA family. As to quaternary structure, monomer and homodimer. Part of the essential Sec protein translocation apparatus which comprises SecA, SecYEG and auxiliary proteins SecDF. Other proteins may also be involved.

It is found in the cell membrane. The protein resides in the cytoplasm. It carries out the reaction ATP + H2O + cellular proteinSide 1 = ADP + phosphate + cellular proteinSide 2.. Functionally, part of the Sec protein translocase complex. Interacts with the SecYEG preprotein conducting channel. Has a central role in coupling the hydrolysis of ATP to the transfer of proteins into and across the cell membrane, serving as an ATP-driven molecular motor driving the stepwise translocation of polypeptide chains across the membrane. The sequence is that of Protein translocase subunit SecA 2 from Geobacillus thermodenitrificans (strain NG80-2).